Reading from the N-terminus, the 246-residue chain is Probable phosphatase Ssed_2939 (246 aa).

H8, H10, H16, H41, E74, H102, H132, D193, and H195 together coordinate Zn(2+).

It belongs to the PHP family. Requires Zn(2+) as cofactor.

The polypeptide is Probable phosphatase Ssed_2939 (Shewanella sediminis (strain HAW-EB3)).